We begin with the raw amino-acid sequence, 200 residues long: Protein GrpE (200 aa).

Over residues 1–11 (MTDNDGQKDFS) the composition is skewed to basic and acidic residues. Residues 1-43 (MTDNDGQKDFSEAAAENAGSKPGEPRVSKPYIMPDDPEETPSE) form a disordered region.

The protein belongs to the GrpE family. As to quaternary structure, homodimer.

The protein resides in the cytoplasm. Its function is as follows. Participates actively in the response to hyperosmotic and heat shock by preventing the aggregation of stress-denatured proteins, in association with DnaK and GrpE. It is the nucleotide exchange factor for DnaK and may function as a thermosensor. Unfolded proteins bind initially to DnaJ; upon interaction with the DnaJ-bound protein, DnaK hydrolyzes its bound ATP, resulting in the formation of a stable complex. GrpE releases ADP from DnaK; ATP binding to DnaK triggers the release of the substrate protein, thus completing the reaction cycle. Several rounds of ATP-dependent interactions between DnaJ, DnaK and GrpE are required for fully efficient folding. The chain is Protein GrpE from Afipia carboxidovorans (strain ATCC 49405 / DSM 1227 / KCTC 32145 / OM5) (Oligotropha carboxidovorans).